The following is a 208-amino-acid chain: Elongation factor Ts, chloroplastic (208 aa).

It belongs to the EF-Ts family.

It localises to the plastid. The protein resides in the chloroplast. Its function is as follows. Associates with the EF-Tu.GDP complex and induces the exchange of GDP to GTP. It remains bound to the aminoacyl-tRNA.EF-Tu.GTP complex up to the GTP hydrolysis stage on the ribosome. The chain is Elongation factor Ts, chloroplastic (tsf) from Cyanidium caldarium (Red alga).